The sequence spans 251 residues: Eukaryotic translation initiation factor 3 subunit K (251 aa).

One can recognise a PCI domain in the interval 46 to 224 (FDCYANLALL…VKVPTNKENE (179 aa)).

Belongs to the eIF-3 subunit K family. In terms of assembly, component of the eukaryotic translation initiation factor 3 (eIF-3) complex.

The protein localises to the cytoplasm. Functionally, component of the eukaryotic translation initiation factor 3 (eIF-3) complex, which is involved in protein synthesis of a specialized repertoire of mRNAs and, together with other initiation factors, stimulates binding of mRNA and methionyl-tRNAi to the 40S ribosome. The eIF-3 complex specifically targets and initiates translation of a subset of mRNAs involved in cell proliferation. In Aspergillus oryzae (strain ATCC 42149 / RIB 40) (Yellow koji mold), this protein is Eukaryotic translation initiation factor 3 subunit K.